Consider the following 231-residue polypeptide: ATP phosphoribosyltransferase (231 aa).

It belongs to the ATP phosphoribosyltransferase family. Short subfamily. Heteromultimer composed of HisG and HisZ subunits.

The protein resides in the cytoplasm. The enzyme catalyses 1-(5-phospho-beta-D-ribosyl)-ATP + diphosphate = 5-phospho-alpha-D-ribose 1-diphosphate + ATP. Its pathway is amino-acid biosynthesis; L-histidine biosynthesis; L-histidine from 5-phospho-alpha-D-ribose 1-diphosphate: step 1/9. In terms of biological role, catalyzes the condensation of ATP and 5-phosphoribose 1-diphosphate to form N'-(5'-phosphoribosyl)-ATP (PR-ATP). Has a crucial role in the pathway because the rate of histidine biosynthesis seems to be controlled primarily by regulation of HisG enzymatic activity. The chain is ATP phosphoribosyltransferase from Brucella suis (strain ATCC 23445 / NCTC 10510).